We begin with the raw amino-acid sequence, 527 residues long: Coproporphyrinogen III oxidase (527 aa).

The segment covering 1–14 (MSTTDRVTTPTPTV) has biased composition (low complexity). The disordered stretch occupies residues 1–23 (MSTTDRVTTPTPTVSGTDAPGPD). FAD contacts are provided by residues 33–38 (GGGITG), 56–57 (ES), Lys64, and 78–81 (GPDS). The disordered stretch occupies residues 231-267 (RRAARQRAAQNNAQQNSSHQNSTGQNNSAGTRGPAAS). A compositionally biased stretch (low complexity) spans 236-252 (QRAAQNNAQQNSSHQNS). FAD is bound by residues Val300, Trp448, and 487 to 489 (VGL).

This sequence belongs to the protoporphyrinogen/coproporphyrinogen oxidase family. Coproporphyrinogen III oxidase subfamily. It depends on FAD as a cofactor.

The protein localises to the cytoplasm. It carries out the reaction coproporphyrinogen III + 3 O2 = coproporphyrin III + 3 H2O2. The protein operates within porphyrin-containing compound metabolism; protoheme biosynthesis. Involved in coproporphyrin-dependent heme b biosynthesis. Catalyzes the oxidation of coproporphyrinogen III to coproporphyrin III. The chain is Coproporphyrinogen III oxidase from Propionibacterium freudenreichii subsp. freudenreichii.